Consider the following 341-residue polypeptide: MINQTYRLVSARQFEVTYKDKVVHSDKVVVRPTHLSICAADQRYYTGSRGKEAMDKKLPMALIHEGIGKVMFDPTGTFKVGTRVVMVPNTPVEEHEVIAENYLRSSRFRSSGYDGFMQDYMFMAPDRLVELPDSINPHVAAFTELITIAVHALSRFERMAHKKRDTFGVWGDGNLGFIMTLLLKKKYPDSKVFIFGKTPYKLDHFSFVDAAYQINDIPEDVRLDHAFECVGGRGSESAIEQIIAHVHPEACVALLGVSEYPVEIETRMVLEKGITLIGSSRSGREDFARTVDFLAQYPEVVDYLETLVGGRFPVRSIEEITNAFEADLTSSWGKTVIEWEI.

Zn(2+) is bound by residues Cys38, His64, Glu65, and Glu144.

It belongs to the zinc-containing alcohol dehydrogenase family. Zn(2+) serves as cofactor.

It carries out the reaction D-ribitol 5-phosphate + NADP(+) = D-ribulose 5-phosphate + NADPH + H(+). It functions in the pathway cell wall biogenesis; poly(ribitol phosphate) teichoic acid biosynthesis. Catalyzes the NADPH dependent reduction of D-ribulose 5-phosphate to D-ribitol 5-phosphate. This Bacillus spizizenii (strain ATCC 23059 / NRRL B-14472 / W23) (Bacillus subtilis subsp. spizizenii) protein is Ribulose-5-phosphate reductase.